Consider the following 201-residue polypeptide: Recombination protein RecR (201 aa).

The C4-type zinc finger occupies 60–75; sequence CSCCGNVDTIDPCTVC. One can recognise a Toprim domain in the interval 83-178; the sequence is AVIIVVEDVA…RITRLAHGVP (96 aa).

The protein belongs to the RecR family.

Its function is as follows. May play a role in DNA repair. It seems to be involved in an RecBC-independent recombinational process of DNA repair. It may act with RecF and RecO. This is Recombination protein RecR from Rhizobium meliloti (strain 1021) (Ensifer meliloti).